The sequence spans 298 residues: 3-deoxy-manno-octulosonate cytidylyltransferase (298 aa).

The helical transmembrane segment at 22 to 42 (VWVLHGLALGAAAAAAAVAYL) threads the bilayer.

Belongs to the KdsB family. Mg(2+) serves as cofactor. In terms of tissue distribution, ubiquitous.

Its subcellular location is the membrane. It carries out the reaction 3-deoxy-alpha-D-manno-oct-2-ulosonate + CTP = CMP-3-deoxy-beta-D-manno-octulosonate + diphosphate. The protein operates within nucleotide-sugar biosynthesis; CMP-3-deoxy-D-manno-octulosonate biosynthesis; CMP-3-deoxy-D-manno-octulosonate from 3-deoxy-D-manno-octulosonate and CTP: step 1/1. Its function is as follows. Catalyzes the production of the sugar nucleotide CMP-3-deoxy-D-manno-octulosonate (CMP-KDO). CTP is the preferred nucleotide donor, and it can partially be replaced with UTP but not with ATP. Activates KDO during the biosynthesis of rhamnogalacturonan II (RG-II), a structurally complex pectic polysaccharide of the primary cell wall. RG-II is essential for the cell wall integrity of rapidly growing tissues and pollen tube growth and elongation. The polypeptide is 3-deoxy-manno-octulosonate cytidylyltransferase (Zea mays (Maize)).